We begin with the raw amino-acid sequence, 64 residues long: Large ribosomal subunit protein bL35 (64 aa).

The protein belongs to the bacterial ribosomal protein bL35 family.

The sequence is that of Large ribosomal subunit protein bL35 from Amoebophilus asiaticus (strain 5a2).